Here is a 694-residue protein sequence, read N- to C-terminus: Methionine--tRNA ligase (694 aa).

A 'HIGH' region motif is present at residues 14-24 (PYANGPIHLGH). Residues C145, C148, C158, and C161 each contribute to the Zn(2+) site. A 'KMSKS' region motif is present at residues 330–334 (KMSKS). K333 is a binding site for ATP. The interval 558 to 579 (SLQATAGQPEPHSQVRHAEHQQ) is disordered. The tRNA-binding domain maps to 593–694 (DFAKVDLRIA…EGAQPGMKVK (102 aa)).

This sequence belongs to the class-I aminoacyl-tRNA synthetase family. MetG type 1 subfamily. As to quaternary structure, homodimer. Zn(2+) is required as a cofactor.

It localises to the cytoplasm. It carries out the reaction tRNA(Met) + L-methionine + ATP = L-methionyl-tRNA(Met) + AMP + diphosphate. In terms of biological role, is required not only for elongation of protein synthesis but also for the initiation of all mRNA translation through initiator tRNA(fMet) aminoacylation. This chain is Methionine--tRNA ligase, found in Methylococcus capsulatus (strain ATCC 33009 / NCIMB 11132 / Bath).